Here is a 20-residue protein sequence, read N- to C-terminus: Outer membrane protein 40Va (20 aa).

It belongs to the Gram-negative porin family. Homotrimer.

It is found in the cell outer membrane. In terms of biological role, forms pores that allow passive diffusion of small molecules across the outer membrane. The protein is Outer membrane protein 40Va of Vibrio alginolyticus.